We begin with the raw amino-acid sequence, 502 residues long: Glycerol kinase (502 aa).

Residue Thr-13 participates in ADP binding. ATP is bound by residues Thr-13, Thr-14, and Ser-15. Thr-13 provides a ligand contact to sn-glycerol 3-phosphate. Arg-17 provides a ligand contact to ADP. 4 residues coordinate sn-glycerol 3-phosphate: Arg-83, Glu-84, Tyr-136, and Asp-246. Glycerol-binding residues include Arg-83, Glu-84, Tyr-136, Asp-246, and Gln-247. Residues Thr-268 and Gly-311 each coordinate ADP. Thr-268, Gly-311, Gln-315, and Gly-412 together coordinate ATP. ADP-binding residues include Gly-412 and Asn-416.

It belongs to the FGGY kinase family.

It catalyses the reaction glycerol + ATP = sn-glycerol 3-phosphate + ADP + H(+). It participates in polyol metabolism; glycerol degradation via glycerol kinase pathway; sn-glycerol 3-phosphate from glycerol: step 1/1. Inhibited by fructose 1,6-bisphosphate (FBP). Functionally, key enzyme in the regulation of glycerol uptake and metabolism. Catalyzes the phosphorylation of glycerol to yield sn-glycerol 3-phosphate. The sequence is that of Glycerol kinase from Francisella tularensis subsp. mediasiatica (strain FSC147).